Reading from the N-terminus, the 214-residue chain is Glutathione S-transferase F11 (214 aa).

The region spanning 2–82 (VVKVYGQIKA…YYATKYADQG (81 aa)) is the GST N-terminal domain. Residues 11 to 12 (AA), 40 to 41 (QK), 53 to 54 (QV), and 66 to 67 (ES) contribute to the glutathione site. The 126-residue stretch at 89 to 214 (TLEGRAIVDQ…WKKLMELAAY (126 aa)) folds into the GST C-terminal domain.

It belongs to the GST superfamily. Phi family.

The protein localises to the cytoplasm. It localises to the cytosol. The catalysed reaction is RX + glutathione = an S-substituted glutathione + a halide anion + H(+). Its function is as follows. May be involved in the conjugation of reduced glutathione to a wide number of exogenous and endogenous hydrophobic electrophiles and have a detoxification role against certain herbicides. This is Glutathione S-transferase F11 from Arabidopsis thaliana (Mouse-ear cress).